Reading from the N-terminus, the 363-residue chain is Aminomethyltransferase (363 aa).

It belongs to the GcvT family. In terms of assembly, the glycine cleavage system is composed of four proteins: P, T, L and H.

It catalyses the reaction N(6)-[(R)-S(8)-aminomethyldihydrolipoyl]-L-lysyl-[protein] + (6S)-5,6,7,8-tetrahydrofolate = N(6)-[(R)-dihydrolipoyl]-L-lysyl-[protein] + (6R)-5,10-methylene-5,6,7,8-tetrahydrofolate + NH4(+). Its function is as follows. The glycine cleavage system catalyzes the degradation of glycine. In Saccharophagus degradans (strain 2-40 / ATCC 43961 / DSM 17024), this protein is Aminomethyltransferase.